The primary structure comprises 280 residues: MKLRASVLIGATILCLILSACSNYAKKVVKQKNHVYTPVYNELIEKYSEIPLNDKLKDTPFMVQVKLPNYKDYLLDNKQVVLTFKLVHHSKKITLIGDANKILQYKNYFQANGARSDIDFYLQPTLNQKGVVMIASNYNDNPNSKEKPQTFDVLQGSQPMLGANTKNLHGYDVSGANNKQVINEVAREKAQLEKINQYYKTLLQDKEQEYTTRKNNQREILETLSNRAGYQMRQNVISSEIFKNGNLNMQAKEEEVREKLQEERENEYLRNQIRSLLSGK.

The N-terminal stretch at 1 to 20 (MKLRASVLIGATILCLILSA) is a signal peptide. The N-palmitoyl cysteine moiety is linked to residue Cys21. Cys21 is lipidated: S-diacylglycerol cysteine.

The protein localises to the cell membrane. The chain is CAG pathogenicity island protein 12 (cagT) from Helicobacter pylori (strain ATCC 700392 / 26695) (Campylobacter pylori).